The following is a 905-amino-acid chain: DNA gyrase subunit A (905 aa).

One can recognise a Topo IIA-type catalytic domain in the interval 35-524 (IPDVRDGLKP…GEFDQDIEDL (490 aa)). Tyrosine 123 serves as the catalytic O-(5'-phospho-DNA)-tyrosine intermediate. The GyrA-box signature appears at 551-557 (QKRGGKG). A disordered region spans residues 885–905 (TAESEEDSELEEEGLEQSEEV). Over residues 886-905 (AESEEDSELEEEGLEQSEEV) the composition is skewed to acidic residues.

Belongs to the type II topoisomerase GyrA/ParC subunit family. In terms of assembly, heterotetramer, composed of two GyrA and two GyrB chains. In the heterotetramer, GyrA contains the active site tyrosine that forms a transient covalent intermediate with DNA, while GyrB binds cofactors and catalyzes ATP hydrolysis.

It localises to the cytoplasm. The catalysed reaction is ATP-dependent breakage, passage and rejoining of double-stranded DNA.. Its function is as follows. A type II topoisomerase that negatively supercoils closed circular double-stranded (ds) DNA in an ATP-dependent manner to modulate DNA topology and maintain chromosomes in an underwound state. Negative supercoiling favors strand separation, and DNA replication, transcription, recombination and repair, all of which involve strand separation. Also able to catalyze the interconversion of other topological isomers of dsDNA rings, including catenanes and knotted rings. Type II topoisomerases break and join 2 DNA strands simultaneously in an ATP-dependent manner. This Rickettsia conorii (strain ATCC VR-613 / Malish 7) protein is DNA gyrase subunit A.